A 659-amino-acid polypeptide reads, in one-letter code: Pentatricopeptide repeat-containing protein At3g26782, mitochondrial (659 aa).

A mitochondrion-targeting transit peptide spans 1-24 (MKVRSKKALFCSVSRLLHTERHTE). PPR repeat units follow at residues 40-74 (DVFSWNSVIADLARSGDSAEALLAFSSMRKLSLYP), 75-109 (TRSSFPCAIKACSSLFDIFSGKQTHQQAFVFGYQS), 110-144 (DIFVSSALIVMYSTCGKLEDARKVFDEIPKRNIVS), 145-171 (WTSMIRGYDLNGNALDAVSLFKDLLVD), 182-216 (DSMGLVSVISACSRVPAKGLTESIHSFVIKRGFDR), 217-249 (GVSVGNTLLDAYAKGGEGGVAVARKIFDQIVDK), 250-284 (DRVSYNSIMSVYAQSGMSNEAFEVFRRLVKNKVVT), 286-320 (NAITLSTVLLAVSHSGALRIGKCIHDQVIRMGLED), 321-351 (DVIVGTSIIDMYCKCGRVETARKAFDRMKNK), 352-386 (NVRSWTAMIAGYGMHGHAAKALELFPAMIDSGVRP), 387-422 (NYITFVSVLAACSHAGLHVEGWRWFNAMKGRFGVEP), and 423-453 (GLEHYGCMVDLLGRAGFLQKAYDLIQRMKMK). The type E motif stretch occupies residues 458–533 (IWSSLLAACR…PPGFSLLELN (76 aa)). Residues 534–564 (GEVHVFLIGDEEHPQREKIYEFLAELNRKLL) form a type E(+) motif region. The type DYW motif stretch occupies residues 565–659 (EAGYVSNTSS…DGGCSCGDYW (95 aa)).

This sequence belongs to the PPR family. PCMP-H subfamily.

It is found in the mitochondrion. In Arabidopsis thaliana (Mouse-ear cress), this protein is Pentatricopeptide repeat-containing protein At3g26782, mitochondrial (PCMP-H34).